Consider the following 555-residue polypeptide: Dimethylaniline monooxygenase [N-oxide-forming] 4 (555 aa).

Residues 9 to 13, E32, and 40 to 41 each bind FAD; these read GAGVS and LW. NADP(+)-binding positions include 60 to 61 and 195 to 198; these read TN and SGGD. A helical transmembrane segment spans residues 515–532; it reads YLKVWGAPLLLASVLLIC.

Belongs to the FMO family. It depends on FAD as a cofactor. In terms of tissue distribution, kidney and liver.

The protein resides in the microsome membrane. It localises to the endoplasmic reticulum membrane. The catalysed reaction is N,N-dimethylaniline + NADPH + O2 + H(+) = N,N-dimethylaniline N-oxide + NADP(+) + H2O. This protein is involved in the oxidative metabolism of a variety of xenobiotics such as drugs and pesticides. The protein is Dimethylaniline monooxygenase [N-oxide-forming] 4 (FMO4) of Oryctolagus cuniculus (Rabbit).